Consider the following 202-residue polypeptide: Protein-methionine-sulfoxide reductase heme-binding subunit MsrQ (202 aa).

Helical transmembrane passes span 8–28, 42–62, 75–95, 110–130, 147–167, and 169–189; these read LAVFLGALAVPAWWLYQAWIF, LGLGALVLLLLTLAMTPLQKL, LGLWCFTYVLLHLSAYYVFIL, PYIIVGMLGFVCLFLLAITSN, LVYLILGLGLLHMLWVVRADL, and EWTLYAVVGASLMLLRLPSIA.

It belongs to the MsrQ family. In terms of assembly, heterodimer of a catalytic subunit (MsrP) and a heme-binding subunit (MsrQ). The cofactor is FMN. It depends on heme b as a cofactor.

The protein localises to the cell inner membrane. In terms of biological role, part of the MsrPQ system that repairs oxidized periplasmic proteins containing methionine sulfoxide residues (Met-O), using respiratory chain electrons. Thus protects these proteins from oxidative-stress damage caused by reactive species of oxygen and chlorine generated by the host defense mechanisms. MsrPQ is essential for the maintenance of envelope integrity under bleach stress, rescuing a wide series of structurally unrelated periplasmic proteins from methionine oxidation. MsrQ provides electrons for reduction to the reductase catalytic subunit MsrP, using the quinone pool of the respiratory chain. The polypeptide is Protein-methionine-sulfoxide reductase heme-binding subunit MsrQ (Pseudomonas aeruginosa (strain ATCC 15692 / DSM 22644 / CIP 104116 / JCM 14847 / LMG 12228 / 1C / PRS 101 / PAO1)).